Reading from the N-terminus, the 723-residue chain is Fatty acid oxidation complex subunit alpha (723 aa).

The enoyl-CoA hydratase/isomerase stretch occupies residues Met1–Asp189. Asp296 contributes to the substrate binding site. The tract at residues Ser311–Ile723 is 3-hydroxyacyl-CoA dehydrogenase. Residues Met325, Asp344, Val401–Glu403, Lys408, and Ser430 each bind NAD(+). Catalysis depends on His451, which acts as the For 3-hydroxyacyl-CoA dehydrogenase activity. Asn454 lines the NAD(+) pocket. Substrate is bound by residues Asn501 and Tyr661.

It in the N-terminal section; belongs to the enoyl-CoA hydratase/isomerase family. The protein in the C-terminal section; belongs to the 3-hydroxyacyl-CoA dehydrogenase family. Heterotetramer of two alpha chains (FadB) and two beta chains (FadA).

The enzyme catalyses a (3S)-3-hydroxyacyl-CoA + NAD(+) = a 3-oxoacyl-CoA + NADH + H(+). The catalysed reaction is a (3S)-3-hydroxyacyl-CoA = a (2E)-enoyl-CoA + H2O. It carries out the reaction a 4-saturated-(3S)-3-hydroxyacyl-CoA = a (3E)-enoyl-CoA + H2O. It catalyses the reaction (3S)-3-hydroxybutanoyl-CoA = (3R)-3-hydroxybutanoyl-CoA. The enzyme catalyses a (3Z)-enoyl-CoA = a 4-saturated (2E)-enoyl-CoA. The catalysed reaction is a (3E)-enoyl-CoA = a 4-saturated (2E)-enoyl-CoA. It participates in lipid metabolism; fatty acid beta-oxidation. Its function is as follows. Involved in the aerobic and anaerobic degradation of long-chain fatty acids via beta-oxidation cycle. Catalyzes the formation of 3-oxoacyl-CoA from enoyl-CoA via L-3-hydroxyacyl-CoA. It can also use D-3-hydroxyacyl-CoA and cis-3-enoyl-CoA as substrate. The polypeptide is Fatty acid oxidation complex subunit alpha (Vibrio campbellii (strain ATCC BAA-1116)).